The following is a 21-amino-acid chain: Peptide PGLa-R3 (21 aa).

Residue Leu-21 is modified to Leucine amide.

As to expression, expressed by the skin glands.

It localises to the secreted. In terms of biological role, antimicrobial peptide. This is Peptide PGLa-R3 from Xenopus ruwenzoriensis (Uganda clawed frog).